The following is a 195-amino-acid chain: Myelin-associated neurite-outgrowth inhibitor (195 aa).

The Cytoplasmic portion of the chain corresponds to 1–18; it reads MNPVYSPGSSGVPYANAK. Residues 19-43 traverse the membrane as a helical segment; that stretch reads GIGYPAGFPMGYAAAAPAYSPNMYA. Over 44-143 the chain is Extracellular; that stretch reads GPNPAFQPGY…APIPQPRGNG (100 aa). Residues 144 to 162 form a helical membrane-spanning segment; that stretch reads VAMGMVAGTTMAMSAGTLL. At 163–195 the chain is on the cytoplasmic side; that stretch reads TSHYPTPVAPHQVTMPTYRPPGTPTYSYVPPQW.

The protein belongs to the FAM168 family.

It localises to the cytoplasm. Its subcellular location is the perinuclear region. The protein resides in the cell membrane. The protein localises to the cell projection. It is found in the axon. Functionally, inhibitor of neuronal axonal outgrowth. This Xenopus tropicalis (Western clawed frog) protein is Myelin-associated neurite-outgrowth inhibitor (fam168b).